We begin with the raw amino-acid sequence, 206 residues long: Small ribosomal subunit protein uS4 (206 aa).

The S4 RNA-binding domain maps to C96 to V156.

This sequence belongs to the universal ribosomal protein uS4 family. Part of the 30S ribosomal subunit. Contacts protein S5. The interaction surface between S4 and S5 is involved in control of translational fidelity.

Its function is as follows. One of the primary rRNA binding proteins, it binds directly to 16S rRNA where it nucleates assembly of the body of the 30S subunit. In terms of biological role, with S5 and S12 plays an important role in translational accuracy. This chain is Small ribosomal subunit protein uS4, found in Pseudomonas fluorescens (strain SBW25).